The chain runs to 433 residues: tRNA-queuosine alpha-mannosyltransferase (433 aa).

The tract at residues 194–244 (PAAKSHIQTSSPSSYPDVEPPEKMLNVAGTNQSHEPTSVTPHQETASPLCG) is disordered. A compositionally biased stretch (polar residues) spans 221–239 (AGTNQSHEPTSVTPHQETA).

It belongs to the glycosyltransferase group 1 family. Glycosyltransferase 4 subfamily.

Its subcellular location is the cytoplasm. The protein resides in the nucleus. It carries out the reaction queuosine(34) in tRNA(Asp) + GDP-alpha-D-mannose = O-4''-alpha-D-mannosylqueuosine(34) in tRNA(Asp) + GDP + H(+). In terms of biological role, glycosyltransferase that specifically catalyzes mannosylation of cytoplasmic tRNA(Asp) modified with queuosine at position 34 (queuosine(34)). Mannosylates the cyclopentene moiety of queuosine(34) in tRNA(Asp) to form mannosyl-queuosine(34). Mannosylation of queuosine(34) in tRNA(Asp) is required to slow-down elongation at cognate codons, GAC and GAU, thereby regulating protein translation. The protein is tRNA-queuosine alpha-mannosyltransferase (gtdc1) of Danio rerio (Zebrafish).